Consider the following 433-residue polypeptide: UPF0597 protein PG_0909 (433 aa).

Belongs to the UPF0597 family.

The chain is UPF0597 protein PG_0909 from Porphyromonas gingivalis (strain ATCC BAA-308 / W83).